We begin with the raw amino-acid sequence, 210 residues long: Putative fructokinase-8 (210 aa).

It belongs to the carbohydrate kinase PfkB family.

It catalyses the reaction D-fructose + ATP = D-fructose 6-phosphate + ADP + H(+). It functions in the pathway glycan biosynthesis; starch biosynthesis. May play an important role in maintaining the flux of carbon towards starch formation. This chain is Putative fructokinase-8, found in Arabidopsis thaliana (Mouse-ear cress).